We begin with the raw amino-acid sequence, 1361 residues long: MGARRESGLHSFLNRKTPPTADMQQGSGGTRPQPFSRFTYGSKSAQSSGGMGGQVACSPKGRGSQRSLLSSNFPFMESVFEDRTAAPQRTPTPRDERSEYFGEAEGSSGLRSSLQCNRELASLDKINDAQARMVVVAGKSHLGLYKFDEAYRMQQVHDYMTPGSLGGGTKFSSSMRRNMRKISTISDVKAGFHHHKNYIAICGTSTSVSIYDINRASAKDSPLITTLSEHSRSINSVDFNMGQTHLLISGGQDGCIKVWDLRSHSYKVNRSDLNFNSGSDSVRDVKWMPTYDFASLGADTSLCSSGRSNKFASVHDSGLLLTFDMRQPNQVERKINAHSGPGLCMHWHPHMDYIISGGRDGKCALWYVGDKVNSMVSVPQGHNSATSYSINTAPITTGYLETVINTSHPVSKLKFRPKYVHNMLNSLIATSSMGEDSDVTIYSLARKHIPQNILTTAAPSLGFVWWNEDIVFNIDKQSVISAWDIRYEPTLLDNLPKGIVKWRDMDGSGLVFVAQEKGTYSMDNGGVTDSVGKGAANRMSNTTLNSTNNMGRDQEVFTYSFQQQYKHQDQEAADRESDHDKELEKERETEVDQHYHYLREQEREHHQEYQEWEHEPFGRHDDHQGNPQTDFYSHAYSDRPMLSKALSTYSSKIASPILSYYGAQTLSHHTSIVSNSPSISGAALEYPGGIESPIMITLDLPQVFGSVRASRLADRKTSKNKGNAPAVRESAVDIFKYLVRELELCHVQERNDPKSISVDDRSKSLDDTELKIQLMENIGLSEHNTWATLIRSTTSMDTNDPAGSHTQGHSKLVDMVKLQGSNILSPDNSDMEDDLGDKLDEMGTARLQENVNHLVGLIFLSTHNAETYASVNDLQNFKIWMLIRDSLLNDLKEAADGSTGRRDASGGAANSDKNGIYTTTSTVNHARQDSITSNFSSFEPSDISRSDGEEKLNLGRLSEQNLKATNQNTTAKLDDTRKLASSSSLNSSEPLLLLEGGNQAKEQSIGLSDLKTCLKERYTASNESVLDIEEESSATVAYSSKQANTECSSSIPIRKTEARTSFIDTIMTNLRSPGLSHLDVDNDAIFGKGKTSTSLGSGASKRSSMHSTDSYHKRPYSSPITYSKITTAAQKAKLGLADHDGLPNRGSISFLANIDAAHADKLLLGKLGLASSPDDGKLLPPWDTGRLIQQLYRYSVETGNIILTVCIILLFQTMYKVTSTRIVKSTLAEFITILHRYEMFEISAHLLKNCPWDDILGAGSGQSTVRLFCENCGKLIVNEHSKTILSKRHQAGESNMTNFGYWYCDSCRKPNSLCVYCEQPMKKLALSFLNCGHGGHFECLQQWFLDEGMSECPSGCSGVLL.

The disordered stretch occupies residues 1 to 104 (MGARRESGLH…DERSEYFGEA (104 aa)). Polar residues-rich tracts occupy residues 39–48 (TYGSKSAQSS) and 64–73 (SQRSLLSSNF). 6 WD repeats span residues 180–221 (RKIS…AKDS), 229–269 (EHSR…YKVN), 277–315 (SGSD…ASVH), 337–376 (AHSG…NSMV), 405–452 (NTSH…IPQN), and 455–493 (TTAA…TLLD). Positions 564–593 (QYKHQDQEAADRESDHDKELEKERETEVDQ) are disordered. A compositionally biased stretch (basic and acidic residues) spans 566-593 (KHQDQEAADRESDHDKELEKERETEVDQ). The stretch at 849 to 890 (ENVNHLVGLIFLSTHNAETYASVNDLQNFKIWMLIRDSLLND) is one WD 7 repeat. Disordered stretches follow at residues 896–916 (DGST…KNGI), 953–982 (NLGR…LASS), and 1091–1113 (TSTS…SYHK). The span at 958–971 (SEQNLKATNQNTTA) shows a compositional bias: polar residues. A compositionally biased stretch (low complexity) spans 1091-1101 (TSTSLGSGASK). WD repeat units follow at residues 1146–1192 (GSIS…QQLY) and 1240–1278 (FEIS…LIVN). The segment at 1314–1356 (CVYCEQPMKKLALSFLNCGHGGHFECLQQWFLDEGMSECPSGC) adopts an RING-type; degenerate zinc-finger fold.

The protein belongs to the WD repeat RTC1 family.

The protein resides in the vacuole. Functionally, may be involved in a process influencing telomere capping. The protein is Restriction of telomere capping protein 1 (RTC1) of Eremothecium gossypii (strain ATCC 10895 / CBS 109.51 / FGSC 9923 / NRRL Y-1056) (Yeast).